The following is a 276-amino-acid chain: 3-methyl-2-oxobutanoate hydroxymethyltransferase (276 aa).

Positions 44 and 83 each coordinate Mg(2+). 3-methyl-2-oxobutanoate-binding positions include 44–45 (DS), aspartate 83, and lysine 113. Glutamate 115 contributes to the Mg(2+) binding site. Glutamate 182 functions as the Proton acceptor in the catalytic mechanism.

It belongs to the PanB family. In terms of assembly, homodecamer; pentamer of dimers. It depends on Mg(2+) as a cofactor.

The protein resides in the cytoplasm. It carries out the reaction 3-methyl-2-oxobutanoate + (6R)-5,10-methylene-5,6,7,8-tetrahydrofolate + H2O = 2-dehydropantoate + (6S)-5,6,7,8-tetrahydrofolate. It functions in the pathway cofactor biosynthesis; (R)-pantothenate biosynthesis; (R)-pantoate from 3-methyl-2-oxobutanoate: step 1/2. In terms of biological role, catalyzes the reversible reaction in which hydroxymethyl group from 5,10-methylenetetrahydrofolate is transferred onto alpha-ketoisovalerate to form ketopantoate. The chain is 3-methyl-2-oxobutanoate hydroxymethyltransferase from Clostridium acetobutylicum (strain ATCC 824 / DSM 792 / JCM 1419 / IAM 19013 / LMG 5710 / NBRC 13948 / NRRL B-527 / VKM B-1787 / 2291 / W).